Consider the following 683-residue polypeptide: Protein kinase C eta type (683 aa).

One can recognise a C2 domain in the interval 1–118 (MSSGTMKFNG…LRTAGTSDTF (118 aa)). 2 positions are modified to phosphoserine: Ser-28 and Ser-32. 2 consecutive Phorbol-ester/DAG-type zinc fingers follow at residues 171–222 (GHKF…VTAC) and 245–295 (PHKF…APNC). Ser-317 is modified (phosphoserine). A Protein kinase domain is found at 355 to 614 (FEFIRVLGKG…EHEILRHPFF (260 aa)). Residues 361–369 (LGKGSFGKV) and Lys-384 each bind ATP. The active-site Proton acceptor is the Asp-479. The residue at position 513 (Thr-513) is a Phosphothreonine; by PDPK1. Positions 615 to 683 (KEIDWVQLNH…FSYVSPELQP (69 aa)) constitute an AGC-kinase C-terminal domain. Residue Thr-656 is modified to Phosphothreonine. At Ser-675 the chain carries Phosphoserine.

The protein belongs to the protein kinase superfamily. AGC Ser/Thr protein kinase family. PKC subfamily. As to quaternary structure, interacts with FYN. Interacts with RALA. Interacts with DGKQ.

It localises to the cytoplasm. It carries out the reaction L-seryl-[protein] + ATP = O-phospho-L-seryl-[protein] + ADP + H(+). The catalysed reaction is L-threonyl-[protein] + ATP = O-phospho-L-threonyl-[protein] + ADP + H(+). With respect to regulation, novel PKCs (PRKCD, PRKCE, PRKCH and PRKCQ) are calcium-insensitive, but activated by diacylglycerol (DAG) and phosphatidylserine. Three specific sites; Thr-513 (activation loop of the kinase domain), Thr-656 (turn motif) and Ser-675 (hydrophobic region), need to be phosphorylated for its full activation. Its function is as follows. Calcium-independent, phospholipid- and diacylglycerol (DAG)-dependent serine/threonine-protein kinase that is involved in the regulation of cell differentiation in keratinocytes and pre-B cell receptor, mediates regulation of epithelial tight junction integrity and foam cell formation, and is required for glioblastoma proliferation and apoptosis prevention in MCF-7 cells. In keratinocytes, binds and activates the tyrosine kinase FYN, which in turn blocks epidermal growth factor receptor (EGFR) signaling and leads to keratinocyte growth arrest and differentiation. Associates with the cyclin CCNE1-CDK2-CDKN1B complex and inhibits CDK2 kinase activity, leading to RB1 dephosphorylation and thereby G1 arrest in keratinocytes. In association with RALA activates actin depolymerization, which is necessary for keratinocyte differentiation. In the pre-B cell receptor signaling, functions downstream of BLNK by up-regulating IRF4, which in turn activates L chain gene rearrangement. Regulates epithelial tight junctions (TJs) by phosphorylating occludin (OCLN) on threonine residues, which is necessary for the assembly and maintenance of TJs. In association with PLD2 and via TLR4 signaling, is involved in lipopolysaccharide (LPS)-induced RGS2 down-regulation and foam cell formation. Upon PMA stimulation, mediates glioblastoma cell proliferation by activating the mTOR pathway, the PI3K/AKT pathway and the ERK1-dependent phosphorylation of ELK1. Involved in the protection of glioblastoma cells from irradiation-induced apoptosis by preventing caspase-9 activation. In camptothecin-treated MCF-7 cells, regulates NF-kappa-B upstream signaling by activating IKBKB, and confers protection against DNA damage-induced apoptosis. Promotes oncogenic functions of ATF2 in the nucleus while blocking its apoptotic function at mitochondria. Phosphorylates ATF2 which promotes its nuclear retention and transcriptional activity and negatively regulates its mitochondrial localization. The sequence is that of Protein kinase C eta type (Prkch) from Rattus norvegicus (Rat).